The following is a 387-amino-acid chain: UDP-Gal:alpha-D-GlcNAc-diphosphoundecaprenol alpha-1,3-galactosyltransferase (387 aa).

It belongs to the glycosyltransferase group 1 family. Glycosyltransferase 4 subfamily. Mg(2+) serves as cofactor. The cofactor is Mn(2+). Fe(2+) is required as a cofactor.

It catalyses the reaction N-acetyl-alpha-D-glucosaminyl-di-trans,octa-cis-undecaprenyl diphosphate + UDP-alpha-D-galactose = alpha-D-Gal-(1-&gt;3)-alpha-D-GlcNAc-di-trans,octa-cis-undecaprenyl diphosphate + UDP + H(+). Its pathway is bacterial outer membrane biogenesis; LPS O-antigen biosynthesis. Involved in the biosynthesis of the lipopolysaccharide (LPS) O-antigen region. Catalyzes the transfer of galactose from UDP-galactose to GlcNAc-undecaprenyl diphosphate via an alpha1,3-linkage. Has strict substrate specificity. The sequence is that of UDP-Gal:alpha-D-GlcNAc-diphosphoundecaprenol alpha-1,3-galactosyltransferase from Escherichia coli.